Consider the following 381-residue polypeptide: Pentraxin-related protein PTX3 (381 aa).

Positions 1–17 (MHLLAILFCALWSAVLA) are cleaved as a signal peptide. Coiled-coil stretches lie at residues 74–101 (LQATDDVLRGELQRLREELGRLAESLAR) and 143–167 (EEAGRALAAVLEELRQTRADLHAVQ). 2 cysteine pairs are disulfide-bonded: cysteine 179–cysteine 357 and cysteine 210–cysteine 271. Residues 179 to 381 (CETAILFPMR…QPHGGAQYVS (203 aa)) form the Pentraxin (PTX) domain. Residue asparagine 220 is glycosylated (N-linked (GlcNAc...) asparagine).

In terms of assembly, homooctamer; disulfide-linked. Binds to C1q. (Microbial infection) Interacts with SARS coronavirus-2/SARS-CoV-2 Nucleoprotein and Spike protein homotrimer. Post-translationally, glycosylated.

It localises to the secreted. In terms of biological role, plays a role in the regulation of innate resistance to pathogens, inflammatory reactions, possibly clearance of self-components and female fertility. The sequence is that of Pentraxin-related protein PTX3 from Homo sapiens (Human).